The sequence spans 249 residues: Tetraspanin-7 (249 aa).

The Cytoplasmic segment spans residues 1–16 (MASRRMETKPVITCLK). A helical transmembrane segment spans residues 17-40 (TLLIIYSFVFWITGVILLAVGVWG). Residues 41 to 56 (KLTLGTYISLIAENST) are Extracellular-facing. N-linked (GlcNAc...) asparagine glycosylation is present at Asn-54. The helical transmembrane segment at 57–75 (NAPYVLIGTGTTIVVFGLF) threads the bilayer. The Cytoplasmic portion of the chain corresponds to 76 to 86 (GCFATCRGSPW). The helical transmembrane segment at 87 to 112 (MLKLYAMFLSLVFLAELVAGISGFVF) threads the bilayer. Topologically, residues 113 to 213 (RHEIKDTFLR…LVTSFMETNM (101 aa)) are extracellular. N-linked (GlcNAc...) asparagine glycosylation is found at Asn-155, Asn-158, Asn-177, and Asn-188. Residues 214–234 (GIIAGVAFGIAFSQLIGMLLA) form a helical membrane-spanning segment. Residues 235–249 (CCLSRFITANQYEMV) lie on the Cytoplasmic side of the membrane.

This sequence belongs to the tetraspanin (TM4SF) family.

It is found in the membrane. May be involved in cell proliferation and cell motility. This is Tetraspanin-7 (Tspan7) from Mus musculus (Mouse).